Reading from the N-terminus, the 107-residue chain is Large ribosomal subunit protein uL24 (107 aa).

The protein belongs to the universal ribosomal protein uL24 family. Part of the 50S ribosomal subunit.

Functionally, one of two assembly initiator proteins, it binds directly to the 5'-end of the 23S rRNA, where it nucleates assembly of the 50S subunit. In terms of biological role, one of the proteins that surrounds the polypeptide exit tunnel on the outside of the subunit. The protein is Large ribosomal subunit protein uL24 of Mesomycoplasma hyopneumoniae (strain 7448) (Mycoplasma hyopneumoniae).